The sequence spans 483 residues: Aspartyl/glutamyl-tRNA(Asn/Gln) amidotransferase subunit B (483 aa).

Belongs to the GatB/GatE family. GatB subfamily. In terms of assembly, heterotrimer of A, B and C subunits.

It catalyses the reaction L-glutamyl-tRNA(Gln) + L-glutamine + ATP + H2O = L-glutaminyl-tRNA(Gln) + L-glutamate + ADP + phosphate + H(+). The enzyme catalyses L-aspartyl-tRNA(Asn) + L-glutamine + ATP + H2O = L-asparaginyl-tRNA(Asn) + L-glutamate + ADP + phosphate + 2 H(+). Functionally, allows the formation of correctly charged Asn-tRNA(Asn) or Gln-tRNA(Gln) through the transamidation of misacylated Asp-tRNA(Asn) or Glu-tRNA(Gln) in organisms which lack either or both of asparaginyl-tRNA or glutaminyl-tRNA synthetases. The reaction takes place in the presence of glutamine and ATP through an activated phospho-Asp-tRNA(Asn) or phospho-Glu-tRNA(Gln). This chain is Aspartyl/glutamyl-tRNA(Asn/Gln) amidotransferase subunit B, found in Thermomicrobium roseum (strain ATCC 27502 / DSM 5159 / P-2).